The following is a 168-amino-acid chain: Crossover junction endodeoxyribonuclease RuvC (168 aa).

Residues Asp8, Glu68, and Asp140 contribute to the active site. Residues Asp8, Glu68, and Asp140 each contribute to the Mg(2+) site.

Belongs to the RuvC family. As to quaternary structure, homodimer which binds Holliday junction (HJ) DNA. The HJ becomes 2-fold symmetrical on binding to RuvC with unstacked arms; it has a different conformation from HJ DNA in complex with RuvA. In the full resolvosome a probable DNA-RuvA(4)-RuvB(12)-RuvC(2) complex forms which resolves the HJ. It depends on Mg(2+) as a cofactor.

The protein resides in the cytoplasm. The enzyme catalyses Endonucleolytic cleavage at a junction such as a reciprocal single-stranded crossover between two homologous DNA duplexes (Holliday junction).. The RuvA-RuvB-RuvC complex processes Holliday junction (HJ) DNA during genetic recombination and DNA repair. Endonuclease that resolves HJ intermediates. Cleaves cruciform DNA by making single-stranded nicks across the HJ at symmetrical positions within the homologous arms, yielding a 5'-phosphate and a 3'-hydroxyl group; requires a central core of homology in the junction. The consensus cleavage sequence is 5'-(A/T)TT(C/G)-3'. Cleavage occurs on the 3'-side of the TT dinucleotide at the point of strand exchange. HJ branch migration catalyzed by RuvA-RuvB allows RuvC to scan DNA until it finds its consensus sequence, where it cleaves and resolves the cruciform DNA. This chain is Crossover junction endodeoxyribonuclease RuvC, found in Gluconobacter oxydans (strain 621H) (Gluconobacter suboxydans).